The following is a 726-amino-acid chain: Sensory/regulatory protein RpfC (726 aa).

Residues 1-22 (MKSPLPWLKRRLSGRADSEHAQ) lie on the Periplasmic side of the membrane. The tract at residues 1–22 (MKSPLPWLKRRLSGRADSEHAQ) is sensor. Residues 23-40 (NLIRIIITTLFISYLGWR) form a helical membrane-spanning segment. The Cytoplasmic segment spans residues 41 to 51 (YQHTHGDTLMA). A helical transmembrane segment spans residues 52–72 (TWLILVGELLVSLGLMVAILL). Topologically, residues 73–94 (RPQVSHTRRLIGMLLDYTCTGA) are periplasmic. Residues 95 to 115 (IMAIQGEPASPLYAVCMWVTI) traverse the membrane as a helical segment. Residues 116 to 127 (GNGLRYGSNYLR) are Cytoplasmic-facing. The helical transmembrane segment at 128-148 (AATAMGSLCFLGAILISPYWK) threads the bilayer. The Periplasmic segment spans residues 149 to 151 (ANP). A helical membrane pass occupies residues 152 to 172 (YLSWGLLLGLIAVPLYFDSLL). The Cytoplasmic portion of the chain corresponds to 173–726 (RAMTRAVREA…DGECSPRSNE (554 aa)). The Histidine kinase domain occupies 195–417 (NMSHEFRTPL…VFWFELPMAI (223 aa)). Histidine 198 bears the Phosphohistidine; by autocatalysis mark. The 119-residue stretch at 463–581 (RMLVADDHEA…KLLDTLADLA (119 aa)) folds into the Response regulatory domain. 4-aspartylphosphate is present on aspartate 512. The HPt domain maps to 618–711 (GEEFERQFVR…KAGKDALDAR (94 aa)). Position 657 is a phosphohistidine (histidine 657).

In terms of assembly, at low DSF concentrations, interacts with RpfF. Post-translationally, autophosphorylated. Activation may require a sequential transfer of a phosphate group from a His in the primary transmitter domain, to an Asp in the receiver domain and to a His in the secondary transmitter domain.

It is found in the cell inner membrane. The enzyme catalyses ATP + protein L-histidine = ADP + protein N-phospho-L-histidine.. With respect to regulation, binding of DSF to the sensor region causes allosteric change, which facilitates RpfC autophosphorylation. Hybrid sensor kinase that regulates diverse biological functions through two distinct molecular mechanisms. At low cell density, the extracellular concentration of the diffusible signaling factor (DSF) is below a threshold, and unphosphorylated RpfC is involved in the negative regulation of DSF synthesis, via direct interaction with the DSF synthase RpfF. Interaction prevents synthesis of DSF, which remains at a basal level. This activity does not involve the phosphorelay mechanism and is not dependent on RpfG. Is also member of the two-component regulatory system RpfG/RpfC, which is involved in the perception and response to DSF, which is essential for cell-cell signaling. At high cell density, the level of extracellular DSF increases and binding of DSF to the sensor region of RpfC causes autophosphorylation of RpfC, which results in the release of RpfF and the activation of RpfG via a four-step phosphorelay. Activation of RpfG leads to the positive regulation of biofilm dispersal and the production of virulence factors. This is Sensory/regulatory protein RpfC (rpfC) from Xanthomonas campestris pv. campestris (strain 8004).